Consider the following 522-residue polypeptide: Light-independent protochlorophyllide reductase subunit B (522 aa).

Residue Asp-36 participates in [4Fe-4S] cluster binding. The active-site Proton donor is Asp-290. Residue 425–426 participates in substrate binding; sequence GL.

Belongs to the ChlB/BchB/BchZ family. Protochlorophyllide reductase is composed of three subunits; ChlL, ChlN and ChlB. Forms a heterotetramer of two ChlB and two ChlN subunits. Requires [4Fe-4S] cluster as cofactor.

It catalyses the reaction chlorophyllide a + oxidized 2[4Fe-4S]-[ferredoxin] + 2 ADP + 2 phosphate = protochlorophyllide a + reduced 2[4Fe-4S]-[ferredoxin] + 2 ATP + 2 H2O. Its pathway is porphyrin-containing compound metabolism; chlorophyll biosynthesis (light-independent). In terms of biological role, component of the dark-operative protochlorophyllide reductase (DPOR) that uses Mg-ATP and reduced ferredoxin to reduce ring D of protochlorophyllide (Pchlide) to form chlorophyllide a (Chlide). This reaction is light-independent. The NB-protein (ChlN-ChlB) is the catalytic component of the complex. This Synechococcus sp. (strain CC9311) protein is Light-independent protochlorophyllide reductase subunit B.